A 392-amino-acid chain; its full sequence is Sulfate adenylyltransferase (392 aa).

The protein belongs to the sulfate adenylyltransferase family.

It carries out the reaction sulfate + ATP + H(+) = adenosine 5'-phosphosulfate + diphosphate. The protein operates within sulfur metabolism; hydrogen sulfide biosynthesis; sulfite from sulfate: step 1/3. The chain is Sulfate adenylyltransferase from Trichormus variabilis (strain ATCC 29413 / PCC 7937) (Anabaena variabilis).